The chain runs to 245 residues: Biosynthetic peptidoglycan transglycosylase (245 aa).

The helical transmembrane segment at 29 to 49 (LLVAFLILSLVLVATVSVINP) threads the bilayer.

The protein belongs to the glycosyltransferase 51 family.

The protein localises to the cell inner membrane. The enzyme catalyses [GlcNAc-(1-&gt;4)-Mur2Ac(oyl-L-Ala-gamma-D-Glu-L-Lys-D-Ala-D-Ala)](n)-di-trans,octa-cis-undecaprenyl diphosphate + beta-D-GlcNAc-(1-&gt;4)-Mur2Ac(oyl-L-Ala-gamma-D-Glu-L-Lys-D-Ala-D-Ala)-di-trans,octa-cis-undecaprenyl diphosphate = [GlcNAc-(1-&gt;4)-Mur2Ac(oyl-L-Ala-gamma-D-Glu-L-Lys-D-Ala-D-Ala)](n+1)-di-trans,octa-cis-undecaprenyl diphosphate + di-trans,octa-cis-undecaprenyl diphosphate + H(+). Its pathway is cell wall biogenesis; peptidoglycan biosynthesis. Peptidoglycan polymerase that catalyzes glycan chain elongation from lipid-linked precursors. The chain is Biosynthetic peptidoglycan transglycosylase from Shewanella amazonensis (strain ATCC BAA-1098 / SB2B).